The sequence spans 322 residues: HPr kinase/phosphorylase (322 aa).

Catalysis depends on residues H146 and K167. 161-168 (GDSGLGKS) serves as a coordination point for ATP. S168 contributes to the Mg(2+) binding site. Residue D185 is the Proton acceptor; for phosphorylation activity. Proton donor; for dephosphorylation activity of the active site. The tract at residues 209-218 (LEVRGLGLLD) is important for the catalytic mechanism of both phosphorylation and dephosphorylation. E210 provides a ligand contact to Mg(2+). R250 is a catalytic residue. An important for the catalytic mechanism of dephosphorylation region spans residues 271-276 (QVAAGR).

This sequence belongs to the HPrK/P family. In terms of assembly, homohexamer. Requires Mg(2+) as cofactor.

The catalysed reaction is [HPr protein]-L-serine + ATP = [HPr protein]-O-phospho-L-serine + ADP + H(+). It carries out the reaction [HPr protein]-O-phospho-L-serine + phosphate + H(+) = [HPr protein]-L-serine + diphosphate. Its function is as follows. Catalyzes the ATP- as well as the pyrophosphate-dependent phosphorylation of a specific serine residue in HPr, a phosphocarrier protein of the phosphoenolpyruvate-dependent sugar phosphotransferase system (PTS). HprK/P also catalyzes the pyrophosphate-producing, inorganic phosphate-dependent dephosphorylation (phosphorolysis) of seryl-phosphorylated HPr (P-Ser-HPr). This is HPr kinase/phosphorylase from Paraburkholderia xenovorans (strain LB400).